The chain runs to 397 residues: Plasma membrane iron permease (397 aa).

A run of 4 helical transmembrane segments spans residues F61–L81, I92–M112, A177–Y197, and G292–W312. A phosphoserine mark is found at S337 and S338. Residues S337 to S346 are compositionally biased toward polar residues. The tract at residues S337–A364 is disordered. T340 carries the phosphothreonine modification. Phosphoserine is present on residues S346, S347, and S355. Residues D349 to A364 show a composition bias toward basic and acidic residues. A Phosphothreonine modification is found at T357. Residues S374, S375, and S376 each carry the phosphoserine modification.

It belongs to the oxidase-dependent Fe transporter (OFeT) (TC 9.A.10.1) family.

It localises to the membrane. In terms of biological role, permease for high affinity iron uptake. This chain is Plasma membrane iron permease (fip1), found in Schizosaccharomyces pombe (strain 972 / ATCC 24843) (Fission yeast).